Here is a 205-residue protein sequence, read N- to C-terminus: Small ribosomal subunit protein uS4 (205 aa).

Residues 95 to 156 form the S4 RNA-binding domain; sequence SRLDNIVYRM…KTIKIPIVKA (62 aa).

This sequence belongs to the universal ribosomal protein uS4 family. Part of the 30S ribosomal subunit. Contacts protein S5. The interaction surface between S4 and S5 is involved in control of translational fidelity.

One of the primary rRNA binding proteins, it binds directly to 16S rRNA where it nucleates assembly of the body of the 30S subunit. Functionally, with S5 and S12 plays an important role in translational accuracy. This chain is Small ribosomal subunit protein uS4, found in Mycoplasma pneumoniae (strain ATCC 29342 / M129 / Subtype 1) (Mycoplasmoides pneumoniae).